We begin with the raw amino-acid sequence, 241 residues long: Uridylate kinase (241 aa).

ATP contacts are provided by residues 15 to 18 (KLSG), Gly-58, and Arg-62. UMP is bound by residues Asp-77 and 138–145 (TGNPYFTT). Residues Thr-165, Tyr-171, and Asp-174 each contribute to the ATP site.

This sequence belongs to the UMP kinase family. Homohexamer.

It localises to the cytoplasm. It carries out the reaction UMP + ATP = UDP + ADP. The protein operates within pyrimidine metabolism; CTP biosynthesis via de novo pathway; UDP from UMP (UMPK route): step 1/1. Its activity is regulated as follows. Inhibited by UTP. Its function is as follows. Catalyzes the reversible phosphorylation of UMP to UDP. The polypeptide is Uridylate kinase (Desulfotalea psychrophila (strain LSv54 / DSM 12343)).